The chain runs to 247 residues: Probable transcriptional regulatory protein Tola_2714 (247 aa).

Residues 1–21 are disordered; sequence MAGHSKWANIKHRKAAQDAKR.

The protein belongs to the TACO1 family.

The protein localises to the cytoplasm. In Tolumonas auensis (strain DSM 9187 / NBRC 110442 / TA 4), this protein is Probable transcriptional regulatory protein Tola_2714.